The following is a 197-amino-acid chain: Inner membrane protein p54 (197 aa).

A helical membrane pass occupies residues 32–52 (YTILIAIVVLVIIIIVLIYLF). The interval 84-123 (PQPGTSKPAGATTASVGKPVTGRPATNRPVTDRPATNNPV) is disordered. 4 tandem repeats follow at residues 139-142 (AAAS), 143-146 (AAAS), 147-150 (AAAS), and 151-154 (AAAS). The tract at residues 139–154 (AAASAAASAAASAAAS) is 4 X 4 AA tandem repeats of A-A-A-S. The interaction with host DYNLL1 stretch occupies residues 163–175 (YTTVTTQNTASQT).

Belongs to the asfivirus envelope protein p54 family. As to quaternary structure, interacts with the host light chain cytoplasmic dynein DYNLL1; this interaction is critical for intracellular microtubule-dependent virus transport toward viral factories.

The protein resides in the virion membrane. Its subcellular location is the host cytoplasm. The protein localises to the host cytoskeleton. It localises to the host endoplasmic reticulum membrane. Inner envelope protein involved, through its interaction with host dynein, in the intracellular microtubule-dependent transport of viral capsid toward viral factories. Seems to induce caspase-3 activation and apoptosis. Plays a role in virion morphogenesis by recruiting and transforming the host ER membranes into the precursors of the viral envelope. Involved in virus attachment to the host cell. This chain is Inner membrane protein p54, found in African swine fever virus (isolate Tick/South Africa/Pretoriuskop Pr4/1996) (ASFV).